The following is a 230-amino-acid chain: Ribose-5-phosphate isomerase A (230 aa).

Substrate contacts are provided by residues 29 to 32, 85 to 88, and 99 to 102; these read TGST, DGAD, and KGAG. Catalysis depends on E108, which acts as the Proton acceptor. Position 126 (K126) interacts with substrate.

This sequence belongs to the ribose 5-phosphate isomerase family. Homodimer.

It catalyses the reaction aldehydo-D-ribose 5-phosphate = D-ribulose 5-phosphate. Its pathway is carbohydrate degradation; pentose phosphate pathway; D-ribose 5-phosphate from D-ribulose 5-phosphate (non-oxidative stage): step 1/1. Catalyzes the reversible conversion of ribose-5-phosphate to ribulose 5-phosphate. The sequence is that of Ribose-5-phosphate isomerase A from Synechococcus sp. (strain JA-3-3Ab) (Cyanobacteria bacterium Yellowstone A-Prime).